A 146-amino-acid chain; its full sequence is Large ribosomal subunit protein uL23m (146 aa).

A disordered region spans residues 108 to 146 (PDLFPEKEPTSPDPLEEELPQQRQSSDPRCPGIPSWFGL).

Belongs to the universal ribosomal protein uL23 family. In terms of assembly, component of the mitochondrial ribosome large subunit (39S) which comprises a 16S rRNA and about 50 distinct proteins.

It is found in the mitochondrion. This Rattus norvegicus (Rat) protein is Large ribosomal subunit protein uL23m (Mrpl23).